Reading from the N-terminus, the 1483-residue chain is Heme-responsive zinc finger transcription factor HAP1 (1483 aa).

Residues 1-50 show a composition bias toward polar residues; the sequence is MSNTPYNSSVPSIASMTQSSVSRSPNMHTATTPGANTSSNSPPLHMSSDS. The segment at 1–56 is disordered; that stretch reads MSNTPYNSSVPSIASMTQSSVSRSPNMHTATTPGANTSSNSPPLHMSSDSSKIKRK. Zn(2+)-binding residues include C64, C67, C74, C81, C84, and C93. The zn(2)-C6 fungal-type DNA-binding region spans 64 to 93; that stretch reads CTICRKRKVKCDKLRPHCQQCTKTGVAHLC. Positions 105-134 form a coiled coil; it reads EKELLKDNELKKLRERVKSLEKTLSKVHSS. Polar residues predominate over residues 162 to 176; the sequence is VNANTGSASSASHMH. The disordered stretch occupies residues 162–208; the sequence is VNANTGSASSASHMHQQQQQQQQQEQQQDFSRSANANANSSSLSISN. Over residues 177–208 the composition is skewed to low complexity; that stretch reads QQQQQQQQQEQQQDFSRSANANANSSSLSISN. Residues 244–444 are heme-responsive; required for HMC formation; the sequence is KGDPYLKLLW…NTIPHHQPQS (201 aa). HRM repeat units lie at residues 280–285, 299–304, 323–328, 347–352, 389–394, and 415–420; these read KCPINH, KCPVDH, RCPVDH, and RCPIDH. 2 stretches are compositionally biased toward polar residues: residues 432–447 and 706–734; these read STHN…SGSH and QLNA…NPTL. 2 disordered regions span residues 432-458 and 706-767; these read STHN…NRKH and QLNA…KENQ. Positions 735 to 759 are enriched in low complexity; that stretch reads NNNMSAATTNSSSRSGSADSRSGSN. An HRM 7 repeat occupies 1192–1197; the sequence is KCPVYQ. The disordered stretch occupies residues 1384–1411; it reads TANTDTSANGSALSTLTSPQGSDLASNS. Over residues 1388-1411 the composition is skewed to polar residues; sequence DTSANGSALSTLTSPQGSDLASNS.

In terms of assembly, binds DNA as a homodimer. Interacts with SRO9 and YDJ1. In the absence of heme, binds to at least four cellular proteins, including YDJ1 and SRO9, forming a high-molecular-weight complex (HMC) which results in repression of its activity and dictates its DNA-binding specificity.

The protein localises to the nucleus. Functionally, regulation of oxygen dependent gene expression. It modulates the expression of Iso-1 (CYP1) and Iso-2 (CYP3) cytochrome c. In response to heme, promotes transcription of genes encoding functions required for respiration, controlling oxidative damage and repression of anaerobic genes. Binds to the sequence 5'-CGGNNNTNNCGG-3'. The protein is Heme-responsive zinc finger transcription factor HAP1 (HAP1) of Saccharomyces cerevisiae (strain RM11-1a) (Baker's yeast).